Reading from the N-terminus, the 210-residue chain is Leucyl/phenylalanyl-tRNA--protein transferase (210 aa).

The protein belongs to the L/F-transferase family.

It localises to the cytoplasm. The catalysed reaction is N-terminal L-lysyl-[protein] + L-leucyl-tRNA(Leu) = N-terminal L-leucyl-L-lysyl-[protein] + tRNA(Leu) + H(+). It catalyses the reaction N-terminal L-arginyl-[protein] + L-leucyl-tRNA(Leu) = N-terminal L-leucyl-L-arginyl-[protein] + tRNA(Leu) + H(+). It carries out the reaction L-phenylalanyl-tRNA(Phe) + an N-terminal L-alpha-aminoacyl-[protein] = an N-terminal L-phenylalanyl-L-alpha-aminoacyl-[protein] + tRNA(Phe). Functions in the N-end rule pathway of protein degradation where it conjugates Leu, Phe and, less efficiently, Met from aminoacyl-tRNAs to the N-termini of proteins containing an N-terminal arginine or lysine. The protein is Leucyl/phenylalanyl-tRNA--protein transferase of Deinococcus radiodurans (strain ATCC 13939 / DSM 20539 / JCM 16871 / CCUG 27074 / LMG 4051 / NBRC 15346 / NCIMB 9279 / VKM B-1422 / R1).